A 127-amino-acid chain; its full sequence is Protein ApaG (127 aa).

An ApaG domain is found at 3 to 127; it reads DDPRYRVEVE…FVLSVPRTLH (125 aa).

The chain is Protein ApaG from Xanthomonas euvesicatoria pv. vesicatoria (strain 85-10) (Xanthomonas campestris pv. vesicatoria).